A 432-amino-acid polypeptide reads, in one-letter code: Cytoplasmic 60S subunit biogenesis factor REH1 (432 aa).

The segment at 6-30 (FTCNCCVIQFKTSDLQRYHMKTEWH) adopts a C2H2-type 1 zinc-finger fold. Residues 79–150 (QSNALPQKQK…NTDYGEDTVS (72 aa)) are disordered. Over residues 86–98 (KQKKPIKSKRGRK) the composition is skewed to basic residues. The span at 105–117 (KRKDRDIAKEKQN) shows a compositional bias: basic and acidic residues. Residues 118–143 (RSVSPSGSISSQLSNLTVGTENTNTD) show a composition bias toward polar residues. 2 consecutive C2H2-type zinc fingers follow at residues 186–209 (TECI…FSEH) and 237–261 (HNCL…SKRH).

The protein belongs to the REI1 family. As to quaternary structure, associates with nascent pre-60S particles that have not yet entered the translating pool, and is released from mature 60S subunits. Interacts with pre-60S factors NMD3, LSG1, and TIF6.

Its subcellular location is the cytoplasm. Pre-60S-associated cytoplasmic factor involved in the cytoplasmic maturation of the 60S subunit. May act redundantly with REI1 to directly promote a stabilizing structural rearrangement in cytoplasmic 60S subunit maturation independent on the REI1-specific ARX1 recycling. The sequence is that of Cytoplasmic 60S subunit biogenesis factor REH1 (REH1) from Saccharomyces cerevisiae (strain ATCC 204508 / S288c) (Baker's yeast).